The following is a 1471-amino-acid chain: ABC multidrug transporter F (1471 aa).

The span at Met1 to Glu19 shows a compositional bias: polar residues. The interval Met1–Glu40 is disordered. The N-linked (GlcNAc...) asparagine glycan is linked to Asn4. The segment covering Gly25 to Glu40 has biased composition (basic and acidic residues). N-linked (GlcNAc...) asparagine glycosylation is found at Asn71 and Asn311. The ABC transporter 1 domain maps to Leu133 to Glu387. A helical membrane pass occupies residues Val498–Tyr518. An N-linked (GlcNAc...) asparagine glycan is attached at Asn519. 5 helical membrane passes run Ala532–Leu552, Phe578–Phe598, Gly607–Phe627, Leu641–Val661, and Ile751–Ala771. The segment at Arg791–Val819 is disordered. One can recognise an ABC transporter 2 domain in the interval Phe829 to Gly1071. Asn842 is a glycosylation site (N-linked (GlcNAc...) asparagine). Gly865 to Thr872 contacts ATP. Transmembrane regions (helical) follow at residues Tyr1167–Phe1187, Phe1201–Phe1221, Phe1252–Leu1272, Leu1288–Ile1308, and Ile1326–Ile1346. N-linked (GlcNAc...) asparagine glycans are attached at residues Asn1386, Asn1422, and Asn1429. The chain crosses the membrane as a helical span at residues Phe1441 to Leu1461.

The protein belongs to the ABC transporter superfamily. ABCG family. PDR (TC 3.A.1.205) subfamily.

The protein localises to the cell membrane. The enzyme catalyses fluconazole(in) + ATP + H2O = fluconazole(out) + ADP + phosphate + H(+). It carries out the reaction itraconazole(in) + ATP + H2O = itraconazole(out) + ADP + phosphate + H(+). With respect to regulation, the efflux inhibitor FK506 impairs the transport activity. Its function is as follows. Pleiotropic ABC efflux transporter that shows a strong substrate specificity for the azole class of drugs such as lotrimazole (CLT), fluconazole (FLC), itraconazole (ITC), ketoconazole (KTC), posaconazole (POS), econazole (ECON), metconazole (MET), miconazole (MCZ), prochloraz (PCLZ), and tebuconazole (TEBZ). This chain is ABC multidrug transporter F, found in Aspergillus fumigatus (strain ATCC MYA-4609 / CBS 101355 / FGSC A1100 / Af293) (Neosartorya fumigata).